A 383-amino-acid chain; its full sequence is Neuropeptide Y receptor type 1 (383 aa).

Topologically, residues 1–44 are extracellular; the sequence is MNSTSFSQVENHSIYYNFSEKNSRFLAFENDDCHLPLAMIFTLA. N-linked (GlcNAc...) asparagine glycosylation is found at N2, N11, and N17. Residues 45–65 form a helical membrane-spanning segment; it reads LAYGAVIILGVSGNLALIIII. The Cytoplasmic segment spans residues 66-76; sequence LKQKEMRNVTN. Residues 77–97 form a helical membrane-spanning segment; sequence ILIVNLSFSDLLVAIMCLPFT. Residues 98–116 lie on the Extracellular side of the membrane; the sequence is FVYTLMDHWVFGEAMCKLN. A disulfide bridge links C113 with C198. The chain crosses the membrane as a helical span at residues 117 to 137; it reads PFVQCVSITVSIFSLVLIAVE. Residues 138–154 are Cytoplasmic-facing; sequence RHQLIINPRGWRPNNRH. The helical transmembrane segment at 155–175 threads the bilayer; the sequence is AYVGIAVIWVLAVASSLPFLI. Topologically, residues 176–211 are extracellular; that stretch reads YQVLTDEPFQNVTLDAFKDKYVCFDKFPSDSHRLSY. N-linked (GlcNAc...) asparagine glycosylation is present at N186. The chain crosses the membrane as a helical span at residues 212 to 232; sequence TTLLLVLQYFGPLCFIFICYF. At 233–260 the chain is on the cytoplasmic side; sequence KIYVRLKRRNSMMDKMRDNKYRSSEAKR. Residues 261–281 traverse the membrane as a helical segment; that stretch reads INIMLLSIVVAFAVCWLPLTI. At 282–299 the chain is on the extracellular side; the sequence is FNTVFDWDHQIIATCNHN. A helical transmembrane segment spans residues 300 to 320; sequence LLFLLCHLTAMISTCVNPIFY. Residues 321–383 lie on the Cytoplasmic side of the membrane; sequence GFLNKNFQRD…KIHTDDNEKI (63 aa). Residue C338 is the site of S-palmitoyl cysteine attachment. S368 is subject to Phosphoserine.

It belongs to the G-protein coupled receptor 1 family.

Its subcellular location is the cell membrane. Receptor for neuropeptide Y and peptide YY. The polypeptide is Neuropeptide Y receptor type 1 (NPY1R) (Bos taurus (Bovine)).